A 145-amino-acid polypeptide reads, in one-letter code: Angiogenin (145 aa).

An N-terminal signal peptide occupies residues 1–24 (MAISPGPLFLIFVLGLVVIPPTLA). At Q25 the chain carries Pyrrolidone carboxylic acid. Residue H37 is the Proton acceptor of the active site. TRNA-binding residues include R45 and D46. Intrachain disulfides connect C50–C104, C63–C115, and C81–C130. The Nucleolar localization signal motif lies at 55–59 (KRRSL). The tRNA site is built by C104 and V126. H137 serves as the catalytic Proton donor.

It belongs to the pancreatic ribonuclease family. Homodimer. Interacts with RNH1; inhibiting ANG ribonuclease activity. Interacts with PCNA.

Its subcellular location is the secreted. The protein resides in the nucleus. It is found in the nucleolus. The protein localises to the cytoplasm. It localises to the stress granule. With respect to regulation, has weak tRNA ribonuclease activity by itself due to partial autoinhibition by its C-terminus (residues 139-145), which folds into a short alpha-helix that partially occludes the substrate-binding site. In absence of stress, the ribonuclease activity is inhibited by RNH1 in the cytoplasm. In response to stress, dissociates from RNH1 in the cytoplasm and associates with cytoplasmic ribosomes with vacant A-sites: ribosomes directly activate the tRNA ribonuclease activity of ANG by refolding the C-terminal alpha-helix. In response to stress, the angiogenic activity of ANG is inhibited by RNH1 in the nucleus. Its function is as follows. Secreted ribonuclease that can either promote or restrict cell proliferation of target cells, depending on the context. Endocytosed in target cells via its receptor PLXNB2 and translocates to the cytoplasm or nucleus. Under stress conditions, localizes to the cytoplasm and promotes the assembly of stress granules (SGs): specifically cleaves a subset of tRNAs within anticodon loops to produce tRNA-derived stress-induced fragments (tiRNAs), resulting in translation repression and inhibition of cell proliferation. tiRNas also prevent formation of apoptosome, thereby promoting cell survival. Preferentially cleaves RNAs between a pyrimidine and an adenosine residue, suggesting that it cleaves the anticodon loop of tRNA(Ala) (32-UUAGCAU-38) after positions 33 and 36. Cleaves a subset of tRNAs, including tRNA(Ala), tRNA(Glu), tRNA(Gly), tRNA(Lys), tRNA(Val), tRNA(His), tRNA(Asp) and tRNA(Sec). Under growth conditions and in differentiated cells, translocates to the nucleus and stimulates ribosomal RNA (rRNA) transcription, including that containing the initiation site sequences of 45S rRNA, thereby promoting cell growth and proliferation. Angiogenin induces vascularization of normal and malignant tissues via its ability to promote rRNA transcription. Involved in hematopoietic stem and progenitor cell (HSPC) growth and survival by promoting rRNA transcription in growth conditions and inhibiting translation in response to stress, respectively. Mediates the crosstalk between myeloid and intestinal epithelial cells to protect the intestinal epithelial barrier integrity: secreted by myeloid cells and promotes intestinal epithelial cells proliferation and survival. Also mediates osteoclast-endothelial cell crosstalk in growing bone: produced by osteoclasts and protects the neighboring vascular cells against senescence by promoting rRNA transcription. The chain is Angiogenin from Mus musculus (Mouse).